The chain runs to 222 residues: Ribosomal RNA small subunit methyltransferase G (222 aa).

S-adenosyl-L-methionine is bound by residues Gly73, Leu78, 124-125 (AE), and Arg137.

This sequence belongs to the methyltransferase superfamily. RNA methyltransferase RsmG family.

The protein localises to the cytoplasm. Its function is as follows. Specifically methylates the N7 position of guanine in position 518 of 16S rRNA. This is Ribosomal RNA small subunit methyltransferase G from Acidothermus cellulolyticus (strain ATCC 43068 / DSM 8971 / 11B).